A 1321-amino-acid chain; its full sequence is Indole-3-acetaldehyde oxidase (1321 aa).

In terms of domain architecture, 2Fe-2S ferredoxin-type spans 1-90 (MSLVFAINGQ…HCNITTSEGL (90 aa)). Cys42, Cys47, and Cys50 together coordinate [2Fe-2S] cluster. The region spanning 215–404 (VDSGMYRWCS…LSIEIPFWHS (190 aa)) is the FAD-binding PCMH-type domain.

Belongs to the xanthine dehydrogenase family. In terms of assembly, aldehyde oxidases (AO) are homodimers and heterodimers of AO subunits. AO-beta is a AAO1-AAO2 heterodimer; AO-gamma is a AAO2 homodimer. AAO2 also forms a dimer with AAO3. [2Fe-2S] cluster is required as a cofactor. The cofactor is FAD. Requires Mo-molybdopterin as cofactor. As to expression, weakly expressed in roots, leaves and seedlings. In seedlings, mostly expressed in lower part of hypocotyls. Detectable in seeds and mature siliques at low levels.

It localises to the cytoplasm. It carries out the reaction indole-3-acetaldehyde + O2 + H2O = (indol-3-yl)acetate + H2O2 + H(+). With respect to regulation, strongly inhibited by iodoacetate, potassium cyanide (KCN), 2-mercaptoethanol, dithiothreitol (DTT), p-chloromercuribenzoate, menadione and estradiol. Weakly inhibited by 4'-(9-acridinylamino)methanesulfon-m-anisidine (mAMSA) and tritonX-100. Not affected by allopurinol. In terms of biological role, in higher plant aldehyde oxidases (AO) appear to be homo- and heterodimeric assemblies of AO subunits with probably different physiological functions. In vitro, AO-gamma uses heptaldehyde, benzaldehyde, naphthaldehyde and cinnamaldehyde as substrates; AO-beta uses indole-3-acetaldehyde (IAAld), indole-3-aldehyde (IAld) and naphtaldehyde; the AAO2-AAO3 dimer uses abscisic aldehyde. The protein is Indole-3-acetaldehyde oxidase (AAO2) of Arabidopsis thaliana (Mouse-ear cress).